We begin with the raw amino-acid sequence, 95 residues long: DNA-directed RNA polymerase subunit Rpo11 (95 aa).

It belongs to the archaeal Rpo11/eukaryotic RPB11/RPC19 RNA polymerase subunit family. Part of the RNA polymerase complex.

It is found in the cytoplasm. It catalyses the reaction RNA(n) + a ribonucleoside 5'-triphosphate = RNA(n+1) + diphosphate. Functionally, DNA-dependent RNA polymerase (RNAP) catalyzes the transcription of DNA into RNA using the four ribonucleoside triphosphates as substrates. This chain is DNA-directed RNA polymerase subunit Rpo11, found in Pyrococcus horikoshii (strain ATCC 700860 / DSM 12428 / JCM 9974 / NBRC 100139 / OT-3).